A 269-amino-acid polypeptide reads, in one-letter code: Cbp/p300-interacting transactivator 2 (269 aa).

Residues 142–200 (AGHQMNGTNQHFRDCNPKHSGGSSTPGGAGGSGTPGGSGGTSGGAGGSSAGGSGGGSTM) form a disordered region. Positions 165 to 198 (STPGGAGGSGTPGGSGGTSGGAGGSSAGGSGGGS) are enriched in gly residues.

The protein belongs to the CITED family. In terms of assembly, interacts (via C-terminus) with EP300 (via CH1 domain); the interaction is stimulated in response to hypoxia. Interacts with PPARA. Interacts (via C-terminus) with TFAP2A, TFAP2B and TFAP2C. Interacts (via C-terminus) with SMAD2. Interacts (via C-terminus) with SMAD3 (via MH2 domain). Interacts with LHX2 (via LIM domains). Interacts with WT1 isoform 1 and isoform 3. In terms of tissue distribution, ubiquitous.

It is found in the nucleus. Functionally, transcriptional coactivator of the p300/CBP-mediated transcription complex. Acts as a bridge, linking TFAP2 transcription factors and the p300/CBP transcriptional coactivator complex in order to stimulate TFAP2-mediated transcriptional activation. Positively regulates TGF-beta signaling through its association with the SMAD/p300/CBP-mediated transcriptional coactivator complex. Stimulates the peroxisome proliferator-activated receptors PPARA transcriptional activity. Enhances estrogen-dependent transactivation mediated by estrogen receptors. Also acts as a transcriptional corepressor; interferes with the binding of the transcription factors HIF1A or STAT2 and the p300/CBP transcriptional coactivator complex. Participates in sex determination and early gonad development by stimulating transcription activation of SRY. Plays a role in controlling left-right patterning during embryogenesis; potentiates transcriptional activation of NODAL-mediated gene transcription in the left lateral plate mesoderm (LPM). Plays an essential role in differentiation of the adrenal cortex from the adrenogonadal primordium (AGP); stimulates WT1-mediated transcription activation thereby up-regulating the nuclear hormone receptor NR5A1 promoter activity. Associates with chromatin to the PITX2 P1 promoter region. The sequence is that of Cbp/p300-interacting transactivator 2 (Cited2) from Mus musculus (Mouse).